Consider the following 231-residue polypeptide: NKG2-C type II integral membrane protein (231 aa).

Residues 1-12 (MNKQRGTFSEVS) are compositionally biased toward polar residues. The segment at 1 to 31 (MNKQRGTFSEVSLAQDPKRQQRKPKDNKSSI) is disordered. The Cytoplasmic segment spans residues 1–70 (MNKQRGTFSE…CQGLLPPPEK (70 aa)). Over residues 16-28 (DPKRQQRKPKDNK) the composition is skewed to basic and acidic residues. The chain crosses the membrane as a helical; Signal-anchor for type II membrane protein span at residues 71-93 (LTAEVLGIICIVLMATVLKTVVL). Residues 94–231 (IPFLEQNNSF…SKRYYCKHKL (138 aa)) are Extracellular-facing. Asn100 is a glycosylation site (N-linked (GlcNAc...) asparagine). The C-type lectin domain occupies 116–229 (HCPEEWITYS…GSSKRYYCKH (114 aa)). 3 cysteine pairs are disulfide-bonded: Cys117/Cys128, Cys145/Cys227, and Cys206/Cys219. N-linked (GlcNAc...) asparagine glycosylation occurs at Asn149.

Heterodimer with KLRD1; disulfide-linked. KLRD1-KLRC2 receptor complex interacts with TYROBP/DAP12 homodimer; this interaction is necessary for the expression on the cell surface. Natural killer cells.

The protein resides in the cell membrane. In terms of biological role, immune activating receptor involved in self-nonself discrimination. In complex with KLRD1 on cytotoxic lymphocyte subsets, recognizes non-classical major histocompatibility MHC-E loaded with signal sequence-derived peptides from non-classical MHC-G molecules, likely playing a role in the generation and effector functions of adaptive natural killer (NK) cells and in maternal-fetal tolerance during pregnancy. Regulates the effector functions of terminally differentiated cytotoxic lymphocyte subsets, and in particular may play a role in adaptive NK cell response to viral infection. Upon MHC-E-peptide binding, transmits intracellular signals via the adapter protein TYROBP/DAP12, triggering the phosphorylation of proximal signaling molecules and cell activation. This Macaca mulatta (Rhesus macaque) protein is NKG2-C type II integral membrane protein (KLRC2).